A 118-amino-acid polypeptide reads, in one-letter code: Ribonuclease P protein component (118 aa).

The protein belongs to the RnpA family. In terms of assembly, consists of a catalytic RNA component (M1 or rnpB) and a protein subunit.

The catalysed reaction is Endonucleolytic cleavage of RNA, removing 5'-extranucleotides from tRNA precursor.. In terms of biological role, RNaseP catalyzes the removal of the 5'-leader sequence from pre-tRNA to produce the mature 5'-terminus. It can also cleave other RNA substrates such as 4.5S RNA. The protein component plays an auxiliary but essential role in vivo by binding to the 5'-leader sequence and broadening the substrate specificity of the ribozyme. In Vibrio parahaemolyticus serotype O3:K6 (strain RIMD 2210633), this protein is Ribonuclease P protein component.